We begin with the raw amino-acid sequence, 317 residues long: Beta-ketoacyl-[acyl-carrier-protein] synthase III (317 aa).

Catalysis depends on residues Cys-112 and His-244. The tract at residues 245-249 is ACP-binding; that stretch reads QANLR. Asn-274 is an active-site residue.

Belongs to the thiolase-like superfamily. FabH family. Homodimer.

Its subcellular location is the cytoplasm. The catalysed reaction is malonyl-[ACP] + acetyl-CoA + H(+) = 3-oxobutanoyl-[ACP] + CO2 + CoA. It functions in the pathway lipid metabolism; fatty acid biosynthesis. In terms of biological role, catalyzes the condensation reaction of fatty acid synthesis by the addition to an acyl acceptor of two carbons from malonyl-ACP. Catalyzes the first condensation reaction which initiates fatty acid synthesis and may therefore play a role in governing the total rate of fatty acid production. Possesses both acetoacetyl-ACP synthase and acetyl transacylase activities. Its substrate specificity determines the biosynthesis of branched-chain and/or straight-chain of fatty acids. The chain is Beta-ketoacyl-[acyl-carrier-protein] synthase III from Aliivibrio fischeri (strain ATCC 700601 / ES114) (Vibrio fischeri).